We begin with the raw amino-acid sequence, 1053 residues long: Focal adhesion kinase 1 (1053 aa).

The interval Met-1–Glu-27 is disordered. The span at Leu-10 to Lys-19 shows a compositional bias: polar residues. One can recognise an FERM domain in the interval Arg-35–Thr-355. Tyr-397 is subject to Phosphotyrosine; by autocatalysis. Position 407 is a phosphotyrosine (Tyr-407). The Protein kinase domain maps to Ile-422–Leu-680. Residues Ile-428 to Gly-434, Lys-454, and Glu-500 to Cys-502 each bind ATP. Catalysis depends on Asp-546, which acts as the Proton acceptor. Phosphotyrosine; by SRC is present on residues Tyr-576 and Tyr-577. The segment covering Gln-686–Arg-697 has biased composition (basic and acidic residues). 2 disordered regions span residues Gln-686–His-741 and Arg-843–Leu-892. Tyr-863 is subject to Phosphotyrosine. Phosphoserine is present on Ser-911. At Tyr-926 the chain carries Phosphotyrosine.

The protein belongs to the protein kinase superfamily. Tyr protein kinase family. FAK subfamily. Interacts with ARHGAP26, GRB7, DCC, PIK3R1, PXN and SRC. Interacts with the ARP2/3 complex. Phosphorylated on tyrosine residues upon activation, e.g. upon integrin signaling. Tyr-397 is the major autophosphorylation site, but other kinases can also phosphorylate this residue. Phosphorylation at Tyr-397 promotes interaction with SRC and SRC family members, leading to phosphorylation at Tyr-576, Tyr-577 and at additional tyrosine residues. Isoform 2 is phosphorylated on serine or threonine residues, but apparently not on tyrosine residues.

The protein resides in the cell junction. It is found in the focal adhesion. The protein localises to the cell membrane. Its subcellular location is the cytoplasm. It localises to the perinuclear region. The protein resides in the cell cortex. It is found in the cytoskeleton. The protein localises to the microtubule organizing center. Its subcellular location is the centrosome. It localises to the nucleus. The protein resides in the cilium basal body. The enzyme catalyses L-tyrosyl-[protein] + ATP = O-phospho-L-tyrosyl-[protein] + ADP + H(+). Subject to autoinhibition, mediated by interactions between the FERM domain and the kinase domain. Activated by autophosphorylation at Tyr-397. This promotes interaction with SRC and phosphorylation at Tyr-576 and Tyr-577 in the kinase activation loop. Phosphorylation at Tyr-576 and Tyr-577 is required for maximal kinase activity. Inhibited by TAE226. In terms of biological role, non-receptor protein-tyrosine kinase that plays an essential role in regulating cell migration, adhesion, spreading, reorganization of the actin cytoskeleton, formation and disassembly of focal adhesions and cell protrusions, cell cycle progression, cell proliferation and apoptosis. Required for early embryonic development, embryonic angiogenesis, normal cardiomyocyte migration and proliferation, and normal heart development. Regulates axon growth and neuronal cell migration, axon branching and synapse formation; required for normal development of the nervous system. Plays a role in osteogenesis and differentiation of osteoblasts. Functions in integrin signal transduction, but also in signaling downstream of numerous growth factor receptors, G-protein coupled receptors (GPCR), ephrin receptors, netrin receptors and LDL receptors. Forms multisubunit signaling complexes with SRC and SRC family members upon activation; this leads to the phosphorylation of additional tyrosine residues, creating binding sites for scaffold proteins, effectors and substrates. Regulates numerous signaling pathways. Promotes activation of phosphatidylinositol 3-kinase and the AKT1 signaling cascade. Promotes activation of MAPK1/ERK2, MAPK3/ERK1 and the MAP kinase signaling cascade. Promotes localized and transient activation of guanine nucleotide exchange factors (GEFs) and GTPase-activating proteins (GAPs), and thereby modulates the activity of Rho family GTPases. Signaling via CAS family members mediates activation of RAC1. Regulates P53/TP53 activity and stability. Phosphorylates SRC; this increases SRC kinase activity. Isoform 2 (FRNK) does not contain a kinase domain and inhibits PTK2/FAK1 phosphorylation and signaling. The sequence is that of Focal adhesion kinase 1 (PTK2) from Gallus gallus (Chicken).